Reading from the N-terminus, the 400-residue chain is Na(+)/H(+) antiporter NhaA (400 aa).

A run of 11 helical transmembrane segments spans residues 10-30 (FNLE…AMII), 60-80 (AHHW…GLEL), 95-115 (IILP…VYLF), 126-146 (GWAI…SLLG), 155-175 (VFLV…IALF), 178-198 (NDLS…LYLL), 218-238 (VAVL…ALFI), 265-285 (GILP…AGFG), 295-315 (IAAG…WLIF), 334-354 (AALL…LAFA), and 364-384 (LGII…LKAT).

This sequence belongs to the NhaA Na(+)/H(+) (TC 2.A.33) antiporter family.

It is found in the cell inner membrane. It carries out the reaction Na(+)(in) + 2 H(+)(out) = Na(+)(out) + 2 H(+)(in). Its function is as follows. Na(+)/H(+) antiporter that extrudes sodium in exchange for external protons. The polypeptide is Na(+)/H(+) antiporter NhaA (Psychrobacter cryohalolentis (strain ATCC BAA-1226 / DSM 17306 / VKM B-2378 / K5)).